The primary structure comprises 159 residues: Eukaryotic translation initiation factor 5A-2 (159 aa).

The segment covering 1–10 (MSDEEHHFEP) has biased composition (basic and acidic residues). The segment at 1–21 (MSDEEHHFEPAADAGASKTYP) is disordered. Lys52 carries the hypusine modification.

The protein belongs to the eIF-5A family. In terms of processing, lys-52 undergoes hypusination, a unique post-translational modification that consists in the addition of a butylamino group from spermidine to lysine side chain, leading to the formation of the unusual amino acid hypusine. eIF-5As are the only known proteins to undergo this modification, which is essential for their function.

Functionally, translation factor that promotes translation elongation and termination, particularly upon ribosome stalling at specific amino acid sequence contexts. Binds between the exit (E) and peptidyl (P) site of the ribosome and promotes rescue of stalled ribosome: specifically required for efficient translation of polyproline-containing peptides as well as other motifs that stall the ribosome. Acts as a ribosome quality control (RQC) cofactor by joining the RQC complex to facilitate peptidyl transfer during CAT tailing step. This chain is Eukaryotic translation initiation factor 5A-2, found in Medicago sativa (Alfalfa).